The sequence spans 207 residues: MTLPDFRLIRLLPLASLVLTACTLPGHKGPGKSPDSPQWRQHQQEVRHLNQYQTRGAFAYISDDQKVYARFFWQQTGQDRYRLLLTNPLGSTELELNAQPGNVQLVDNKGQRYTADDAEEMIGKLTGMPIPLNSLRQWILGLPGDATDYKLDDQYRLSEVNYHQDGKNWKVVYGGYDSKTQPAMPANMELSDGSQRIKLKMDNWIVK.

The first 21 residues, 1–21 (MTLPDFRLIRLLPLASLVLTA), serve as a signal peptide directing secretion. The N-palmitoyl cysteine moiety is linked to residue Cys-22. Cys-22 is lipidated: S-diacylglycerol cysteine.

It belongs to the LolB family. In terms of assembly, monomer.

Its subcellular location is the cell outer membrane. Plays a critical role in the incorporation of lipoproteins in the outer membrane after they are released by the LolA protein. This is Outer-membrane lipoprotein LolB from Salmonella typhi.